Consider the following 213-residue polypeptide: ATP-dependent dethiobiotin synthetase BioD 2 (213 aa).

D13–I18 serves as a coordination point for ATP. T17 provides a ligand contact to Mg(2+). K38 is an active-site residue. T42 is a substrate binding site. Residues D50 and E115–G118 contribute to the ATP site. Residues D50 and E115 each contribute to the Mg(2+) site.

The protein belongs to the dethiobiotin synthetase family. As to quaternary structure, homodimer. The cofactor is Mg(2+).

It is found in the cytoplasm. The enzyme catalyses (7R,8S)-7,8-diammoniononanoate + CO2 + ATP = (4R,5S)-dethiobiotin + ADP + phosphate + 3 H(+). Its pathway is cofactor biosynthesis; biotin biosynthesis; biotin from 7,8-diaminononanoate: step 1/2. In terms of biological role, catalyzes a mechanistically unusual reaction, the ATP-dependent insertion of CO2 between the N7 and N8 nitrogen atoms of 7,8-diaminopelargonic acid (DAPA, also called 7,8-diammoniononanoate) to form a ureido ring. The chain is ATP-dependent dethiobiotin synthetase BioD 2 from Pasteurella multocida (strain Pm70).